Here is a 406-residue protein sequence, read N- to C-terminus: Acetylornithine/succinyldiaminopimelate aminotransferase (406 aa).

Pyridoxal 5'-phosphate contacts are provided by residues 108–109 (GT) and phenylalanine 141. Arginine 144 lines the N(2)-acetyl-L-ornithine pocket. Position 226-229 (226-229 (DEVQ)) interacts with pyridoxal 5'-phosphate. N6-(pyridoxal phosphate)lysine is present on lysine 255. Residue serine 283 coordinates N(2)-acetyl-L-ornithine. Threonine 284 serves as a coordination point for pyridoxal 5'-phosphate.

The protein belongs to the class-III pyridoxal-phosphate-dependent aminotransferase family. ArgD subfamily. As to quaternary structure, homodimer. Pyridoxal 5'-phosphate serves as cofactor.

The protein resides in the cytoplasm. It catalyses the reaction N(2)-acetyl-L-ornithine + 2-oxoglutarate = N-acetyl-L-glutamate 5-semialdehyde + L-glutamate. The catalysed reaction is N-succinyl-(2S,6S)-2,6-diaminopimelate + 2-oxoglutarate = (S)-2-succinylamino-6-oxoheptanedioate + L-glutamate. Its pathway is amino-acid biosynthesis; L-arginine biosynthesis; N(2)-acetyl-L-ornithine from L-glutamate: step 4/4. The protein operates within amino-acid biosynthesis; L-lysine biosynthesis via DAP pathway; LL-2,6-diaminopimelate from (S)-tetrahydrodipicolinate (succinylase route): step 2/3. Its function is as follows. Involved in both the arginine and lysine biosynthetic pathways. The chain is Acetylornithine/succinyldiaminopimelate aminotransferase from Escherichia coli (strain K12).